A 142-amino-acid chain; its full sequence is Transcriptional regulator MraZ (142 aa).

2 SpoVT-AbrB domains span residues 5 to 47 (EYQH…TINE) and 76 to 119 (ACIV…SREK).

It belongs to the MraZ family. In terms of assembly, forms oligomers.

It localises to the cytoplasm. Its subcellular location is the nucleoid. The chain is Transcriptional regulator MraZ from Clostridium botulinum (strain Alaska E43 / Type E3).